Here is a 305-residue protein sequence, read N- to C-terminus: GMP synthase [glutamine-hydrolyzing] subunit B (305 aa).

In terms of domain architecture, GMPS ATP-PPase spans V2 to R185. S29–S35 serves as a coordination point for ATP.

Heterodimer composed of a glutamine amidotransferase subunit (A) and a GMP-binding subunit (B).

The enzyme catalyses XMP + L-glutamine + ATP + H2O = GMP + L-glutamate + AMP + diphosphate + 2 H(+). It participates in purine metabolism; GMP biosynthesis; GMP from XMP (L-Gln route): step 1/1. In terms of biological role, catalyzes the synthesis of GMP from XMP. The protein is GMP synthase [glutamine-hydrolyzing] subunit B of Natronomonas pharaonis (strain ATCC 35678 / DSM 2160 / CIP 103997 / JCM 8858 / NBRC 14720 / NCIMB 2260 / Gabara) (Halobacterium pharaonis).